The following is a 538-amino-acid chain: Putative outer membrane porin BglH (538 aa).

Residues 1-25 (MFRRNIITSAILLMAPLAFSAQSLA) form the signal peptide.

It belongs to the porin LamB (TC 1.B.3) family.

It localises to the cell outer membrane. In terms of biological role, may be a sugar porin with a broad carbohydrate specificity. This Escherichia coli O6:K15:H31 (strain 536 / UPEC) protein is Putative outer membrane porin BglH (bglH).